We begin with the raw amino-acid sequence, 281 residues long: Large ribosomal subunit protein uL2 (281 aa).

The disordered stretch occupies residues 224–281 (RGSAMNPNDHPHGGGEGHQPIGRKSPMTPWGKKALGVKTRKTKKASNQFIIRRRKESK).

The protein belongs to the universal ribosomal protein uL2 family. In terms of assembly, part of the 50S ribosomal subunit. Forms a bridge to the 30S subunit in the 70S ribosome.

Its function is as follows. One of the primary rRNA binding proteins. Required for association of the 30S and 50S subunits to form the 70S ribosome, for tRNA binding and peptide bond formation. It has been suggested to have peptidyltransferase activity; this is somewhat controversial. Makes several contacts with the 16S rRNA in the 70S ribosome. In Metamycoplasma arthritidis (strain 158L3-1) (Mycoplasma arthritidis), this protein is Large ribosomal subunit protein uL2.